The following is an 817-amino-acid chain: ABC transporter G family member STR (817 aa).

The segment at 1 to 30 (MARLERDGTNKSLESLMDSHKPGGTTTNLN) is disordered. Over 1 to 542 (MARLERDGTN…RTVLNVIRTP (542 aa)) the chain is Cytoplasmic. Residues 43 to 294 (LEFTNLSYSI…LSGFGRPVPD (252 aa)) form the ABC transporter domain. 87-94 (GPSGAGKS) contributes to the ATP binding site. Disordered stretches follow at residues 321 to 349 (QYQH…RRNT), 362 to 395 (GFTA…LERR), and 439 to 463 (RPPS…GPRS). Residues 362-375 (GFTAGTPQPDSSQF) are compositionally biased toward polar residues. Residues 377–388 (LDDDDNDDDENF) show a composition bias toward acidic residues. Residues 543–563 (ELFASREIVLTVMALVLSTIF) form a helical membrane-spanning segment. The Extracellular portion of the chain corresponds to 564–579 (KNLGDTTFIDINRLLN). The chain crosses the membrane as a helical span at residues 580–600 (FYIFAVCLVFFSSNDAVPSFI). Over 601 to 621 (MERFIFIRETSHNAYRASSYV) the chain is Cytoplasmic. The chain crosses the membrane as a helical span at residues 622 to 642 (ISSLIVYLPFFAVQGLTFAVI). Topologically, residues 643-657 (TKLMLHLKSNLFNFW) are extracellular. The chain crosses the membrane as a helical span at residues 658–678 (MILFASLITTNAYVMLVSALV). Residues 679 to 681 (PSY) lie on the Cytoplasmic side of the membrane. The chain crosses the membrane as a helical span at residues 682–702 (ITGYAVVIATTALFFLTCGFF). Over 703-787 (LKRTQIPAYW…TMDITMESLW (85 aa)) the chain is Extracellular. N-linked (GlcNAc...) asparagine glycosylation occurs at Asn-762. The chain crosses the membrane as a helical span at residues 788–808 (YDILILLAWGVLYRFFFYLVL). At 809 to 817 (RFYSKNERK) the chain is on the cytoplasmic side.

Belongs to the ABC transporter superfamily. ABCG family. Stunted arbuscule (STR) subfamily. In terms of assembly, heterodimerizes with STR2; the resulting transporter is located in the peri-arbuscular membrane. Expressed constitutively in the vascular tissue of roots.

It is found in the cell membrane. Its function is as follows. Together with STR2, required for arbuscule development in arbuscular mycorrhizal (AM) symbiosis. The protein is ABC transporter G family member STR of Medicago truncatula (Barrel medic).